The primary structure comprises 74 residues: Tetrahydromethanopterin S-methyltransferase subunit G (74 aa).

The helical transmembrane segment at 50–70 (IGILYGLVIGLYLCMLYILLG) threads the bilayer.

It belongs to the MtrG family. The complex is composed of 8 subunits; MtrA, MtrB, MtrC, MtrD, MtrE, MtrF, MtrG and MtrH.

The protein localises to the cell membrane. It catalyses the reaction 5-methyl-5,6,7,8-tetrahydromethanopterin + coenzyme M + 2 Na(+)(in) = 5,6,7,8-tetrahydromethanopterin + methyl-coenzyme M + 2 Na(+)(out). The protein operates within one-carbon metabolism; methanogenesis from CO(2); methyl-coenzyme M from 5,10-methylene-5,6,7,8-tetrahydromethanopterin: step 2/2. Its function is as follows. Part of a complex that catalyzes the formation of methyl-coenzyme M and tetrahydromethanopterin from coenzyme M and methyl-tetrahydromethanopterin. This is an energy-conserving, sodium-ion translocating step. This Methanopyrus kandleri (strain AV19 / DSM 6324 / JCM 9639 / NBRC 100938) protein is Tetrahydromethanopterin S-methyltransferase subunit G.